A 282-amino-acid polypeptide reads, in one-letter code: uncharacterized protein (282 aa).

One can recognise an HTH rpiR-type domain in the interval 2-78 (TDVLAVIREM…IKIAVSLAKQ (77 aa)). The H-T-H motif DNA-binding region spans 38-57 (VNELANACDTSEASIIRFCR). The region spanning 122–262 (AAEALANANK…FILVAQKKYN (141 aa)) is the SIS domain.

This is an uncharacterized protein from Caldanaerobacter subterraneus subsp. tengcongensis (strain DSM 15242 / JCM 11007 / NBRC 100824 / MB4) (Thermoanaerobacter tengcongensis).